Consider the following 299-residue polypeptide: Non-structural protein V (299 aa).

Positions 40–98 (SDNPGQEQATCKEEEAGASGLSKPCLSAIGSTEGGAPRIRGQGSGESDDDTETLGFPSR) are disordered. The segment at 110-120 (YYVYDHSGEAV) is interaction with host STAT1. Residues 134 to 145 (GLDGDSTLSGGD) show a composition bias toward low complexity. Disordered stretches follow at residues 134 to 174 (GLDG…APIS) and 204 to 230 (PKLG…PIKK). The span at 146 to 160 (NESENSDVDIGEPDT) shows a compositional bias: acidic residues. Positions 232, 251, 255, 267, 269, 272, 276, and 279 each coordinate Zn(2+).

Belongs to the paramyxoviruses V protein family. As to quaternary structure, interacts with host IFIH1/MDA5 and DHX58/LGP2; these interactions are involved in the inhibition of the host type I interferon signaling pathway. Interacts with host TYK2; this interaction inhibits the type I interferon signaling pathway without affecting the type II pathway. Interacts with host IRF7; this interaction inhibits IRF7 translocation to the nucleus. Interacts with host CHUK. Interacts with host RELA/p65; this interaction inhibits the nuclear translocation of NF-KappaB. Interacts (via N-terminus) with host STAT1 and JAK1; these interactions inhibit STAT1 phosphorylation by Jak1 and thereby the type I interferon signaling pathway. Interacts (via C-terminus) with host STAT2; this interaction is involved in the inhibition of the host type I interferon signaling pathway. Forms a complex with host PPP1CA and PPP1CC; this interaction prevents dephosphorylation of host IFIH1/MDA5 and leads to the inhibition of the host type I interferon signaling pathway. Interacts with host IRF9; this interaction prevents the binding of IRF9 to STAT2 and thereby the type I interferon signaling pathway. Interacts with host RIGI regulatory protein (via CARDs domain) and host TRIM25 (via SPRY domain); these interactions prevent TRIM25-mediated ubiquitination of RIG-I and disrupts downstream RIG-I signaling.

Its subcellular location is the host cytoplasm. Plays an essential role in the inhibition of host immune response. Prevents the establishment of cellular antiviral state by blocking interferon-alpha/beta (IFN-alpha/beta) production and signaling pathway. Interacts with host IFIH1/MDA5 and DHX58/LGP2 to inhibit the transduction pathway involved in the activation of IFN-beta promoter, thus protecting the virus against cell antiviral state. Blocks the type I interferon signaling pathway by interacting with host TYK2 and thereby inhibiting downstream STAT1 and STAT2 phosphorylation. Blocks the type I interferon signaling pathway by disrupting the RIG-I signaling pathway. Moderately affects the type II interferon signaling. Prevents PP1alpha/gamma-mediated dephosphorylation of host IFIH1/MDA5 and thus blocks its activation. This Measles virus (strain IP-3-Ca) (MeV) protein is Non-structural protein V (P/V).